Consider the following 511-residue polypeptide: Maturase K (511 aa).

This sequence belongs to the intron maturase 2 family. MatK subfamily.

It is found in the plastid. It localises to the chloroplast. Usually encoded in the trnK tRNA gene intron. Probably assists in splicing its own and other chloroplast group II introns. The sequence is that of Maturase K from Trifolium burchellianum (Wild clover).